Here is a 225-residue protein sequence, read N- to C-terminus: Urease accessory protein UreE (225 aa).

Composition is skewed to basic and acidic residues over residues 189 to 202 (HSHDFMGHSHEHEG) and 212 to 225 (NSHDNEHDEHHSRR). The interval 189 to 225 (HSHDFMGHSHEHEGHRHVHNHAGNSHDNEHDEHHSRR) is disordered.

The protein belongs to the UreE family.

It localises to the cytoplasm. Involved in urease metallocenter assembly. Binds nickel. Probably functions as a nickel donor during metallocenter assembly. This chain is Urease accessory protein UreE, found in Edwardsiella ictaluri.